A 515-amino-acid chain; its full sequence is Lysine--tRNA ligase (515 aa).

2 residues coordinate Mg(2+): Glu422 and Glu429.

This sequence belongs to the class-II aminoacyl-tRNA synthetase family. Homodimer. The cofactor is Mg(2+).

The protein resides in the cytoplasm. The catalysed reaction is tRNA(Lys) + L-lysine + ATP = L-lysyl-tRNA(Lys) + AMP + diphosphate. The protein is Lysine--tRNA ligase of Clostridium acetobutylicum (strain ATCC 824 / DSM 792 / JCM 1419 / IAM 19013 / LMG 5710 / NBRC 13948 / NRRL B-527 / VKM B-1787 / 2291 / W).